The chain runs to 153 residues: Small ribosomal subunit protein uS9 (153 aa).

A disordered region spans residues 122 to 153; it reads KKAGFLTRDPRSTERKKYGLKKARKAPQYSKR. Positions 129-138 are enriched in basic and acidic residues; it reads RDPRSTERKK. Basic residues predominate over residues 139 to 153; sequence YGLKKARKAPQYSKR.

It belongs to the universal ribosomal protein uS9 family.

In Mycobacterium leprae (strain TN), this protein is Small ribosomal subunit protein uS9 (rpsI).